The sequence spans 305 residues: tRNA uridine(34) hydroxylase (305 aa).

One can recognise a Rhodanese domain in the interval Ala-125–Ser-219. Catalysis depends on Cys-179, which acts as the Cysteine persulfide intermediate.

This sequence belongs to the TrhO family.

It catalyses the reaction uridine(34) in tRNA + AH2 + O2 = 5-hydroxyuridine(34) in tRNA + A + H2O. In terms of biological role, catalyzes oxygen-dependent 5-hydroxyuridine (ho5U) modification at position 34 in tRNAs. This is tRNA uridine(34) hydroxylase from Brucella anthropi (strain ATCC 49188 / DSM 6882 / CCUG 24695 / JCM 21032 / LMG 3331 / NBRC 15819 / NCTC 12168 / Alc 37) (Ochrobactrum anthropi).